Consider the following 378-residue polypeptide: Ribosomal RNA large subunit methyltransferase G (378 aa).

It belongs to the methyltransferase superfamily. RlmG family.

Its subcellular location is the cytoplasm. The enzyme catalyses guanosine(1835) in 23S rRNA + S-adenosyl-L-methionine = N(2)-methylguanosine(1835) in 23S rRNA + S-adenosyl-L-homocysteine + H(+). Its function is as follows. Specifically methylates the guanine in position 1835 (m2G1835) of 23S rRNA. This Salmonella agona (strain SL483) protein is Ribosomal RNA large subunit methyltransferase G.